Consider the following 110-residue polypeptide: U1-lycotoxin-Ls1gg (110 aa).

The N-terminal stretch at Met1–Ala20 is a signal peptide. Residues Glu21–Arg44 constitute a propeptide that is removed on maturation. 3 cysteine pairs are disulfide-bonded: Cys54/Cys71, Cys61/Cys89, and Cys73/Cys87.

This sequence belongs to the neurotoxin 19 (CSTX) family. 03 subfamily. In terms of tissue distribution, expressed by the venom gland.

It is found in the secreted. The sequence is that of U1-lycotoxin-Ls1gg from Lycosa singoriensis (Wolf spider).